The chain runs to 63 residues: Insect toxin TbIT-1 (63 aa).

The region spanning 2–63 (KEGYPVDSRG…VYDNASNKCB (62 aa)) is the LCN-type CS-alpha/beta domain. 4 disulfides stabilise this stretch: Cys-12–Cys-62, Cys-16–Cys-38, Cys-24–Cys-43, and Cys-28–Cys-45.

This sequence belongs to the long (4 C-C) scorpion toxin superfamily. Sodium channel inhibitor family. Beta subfamily. As to expression, expressed by the venom gland.

The protein localises to the secreted. Beta toxins bind voltage-independently at site-4 of sodium channels (Nav) and shift the voltage of activation toward more negative potentials thereby affecting sodium channel activation and promoting spontaneous and repetitive firing. This toxin is only active against insects. This Tityus bahiensis (Brazilian scorpion) protein is Insect toxin TbIT-1.